A 605-amino-acid polypeptide reads, in one-letter code: uncharacterized protein (605 aa).

The chain crosses the membrane as a helical span at residues isoleucine 56–phenylalanine 78.

The protein resides in the cell membrane. This is an uncharacterized protein from Bacillus subtilis (strain 168).